The sequence spans 173 residues: Probable xanthine dehydrogenase subunit E (173 aa).

The region spanning 14 to 90 is the 2Fe-2S ferredoxin-type domain; that stretch reads EQFRMTVNGQ…GHSITTIEGL (77 aa). Residues Cys52, Cys57, Cys60, Cys72, Cys110, Cys113, Cys145, and Cys147 each contribute to the [2Fe-2S] cluster site.

In terms of assembly, could be composed of four subunits: PucA, PucC, PucD and PucE. The cofactor is [2Fe-2S] cluster.

It carries out the reaction xanthine + NAD(+) + H2O = urate + NADH + H(+). It catalyses the reaction hypoxanthine + NAD(+) + H2O = xanthine + NADH + H(+). It functions in the pathway purine metabolism; hypoxanthine degradation; urate from hypoxanthine: step 1/2. The protein operates within purine metabolism; hypoxanthine degradation; urate from hypoxanthine: step 2/2. Oxidizes hypoxanthine and xanthine to uric acid. The protein is Probable xanthine dehydrogenase subunit E (pucE) of Bacillus subtilis (strain 168).